An 833-amino-acid polypeptide reads, in one-letter code: MHWIKCLLTAFICFTVIVQVHSSGSFELRLKYFSNDHGRDNEGRCCSGESDGATGKCLGSCKTRFRVCLKHYQATIDTTSQCTYGDVITPILGENSVNLTDAQRFQNKGFTNPIQFPFSFSWPGTFSLIVEAWHDTNNSGNARTNKLLIQRLLVQQVLEVSSEWKTNKSESQYTSLEYDFRVTCDLNYYGSGCAKFCRPRDDSFGHSTCSETGEIICLTGWQGDYCHIPKCAKGCEHGHCDKPNQCVCQLGWKGALCNECVLEPNCIHGTCNKPWTCICNEGWGGLYCNQDLNYCTNHRPCKNGGTCFNTGEGLYTCKCAPGYSGDDCENEIYSCDADVNPCQNGGTCIDEPHTKTGYKCHCANGWSGKMCEEKVLTCSDKPCHQGICRNVRPGLGSKGQGYQCECPIGYSGPNCDLQLDNCSPNPCINGGSCQPSGKCICPAGFSGTRCETNIDDCLGHQCENGGTCIDMVNQYRCQCVPGFHGTHCSSKVDLCLIRPCANGGTCLNLNNDYQCTCRAGFTGKDCSVDIDECSSGPCHNGGTCMNRVNSFECVCANGFRGKQCDEESYDSVTFDAHQYGATTQARADGLTNAQVVLIAVFSVAMPLVAVIAACVVFCMKRKRKRAQEKDDAEARKQNEQNAVATMHHNGSGVGVALASASLGGKTGSNSGLTFDGGNPNIIKNTWDKSVNNICASAAAAAAAAAAADECLMYGGYVASVADNNNANSDFCVAPLQRAKSQKQLNTDPTLMHRGSPAGSSAKGASGGGPGAAEGKRISVLGEGSYCSQRWPSLAAAGVAGACSSQLMAAASVAGSGAGTAQQQRSVVCGTPHM.

Positions 1–18 (MHWIKCLLTAFICFTVIV) are cleaved as a signal peptide. Residues 19–594 (QVHSSGSFEL…ARADGLTNAQ (576 aa)) are Extracellular-facing. 2 disulfide bridges follow: Cys46–Cys61 and Cys68–Cys82. N-linked (GlcNAc...) asparagine glycans are attached at residues Asn98, Asn137, and Asn167. In terms of domain architecture, DSL spans 182–226 (VTCDLNYYGSGCAKFCRPRDDSFGHSTCSETGEIICLTGWQGDYC). 30 cysteine pairs are disulfide-bonded: Cys184/Cys193, Cys197/Cys209, Cys217/Cys226, Cys231/Cys240, Cys235/Cys246, Cys248/Cys257, Cys260/Cys271, Cys266/Cys277, Cys279/Cys288, Cys295/Cys307, Cys301/Cys317, Cys319/Cys328, Cys335/Cys348, Cys342/Cys360, Cys362/Cys371, Cys378/Cys388, Cys383/Cys404, Cys406/Cys415, Cys422/Cys433, Cys427/Cys439, Cys441/Cys450, Cys457/Cys468, Cys462/Cys477, Cys479/Cys488, Cys495/Cys506, Cys500/Cys515, Cys517/Cys526, Cys533/Cys544, Cys538/Cys553, and Cys555/Cys564. EGF-like domains follow at residues 227 to 258 (HIPK…ALCN), 256 to 289 (LCNE…LYCN), 291 to 329 (DLNY…DDCE), 331 to 372 (EIYS…KMCE), 374 to 416 (KVLT…PNCD), and 418 to 451 (QLDN…TRCE). Positions 453 to 489 (NIDDCLGHQCENGGTCIDMVNQYRCQCVPGFHGTHCS) constitute an EGF-like 7; calcium-binding domain. The EGF-like 8 domain maps to 491-527 (KVDLCLIRPCANGGTCLNLNNDYQCTCRAGFTGKDCS). Residues 529 to 565 (DIDECSSGPCHNGGTCMNRVNSFECVCANGFRGKQCD) form the EGF-like 9; calcium-binding domain. The helical transmembrane segment at 595–617 (VVLIAVFSVAMPLVAVIAACVVF) threads the bilayer. Residues 618–833 (CMKRKRKRAQ…RSVVCGTPHM (216 aa)) lie on the Cytoplasmic side of the membrane. Thr666 is subject to Phosphothreonine. The disordered stretch occupies residues 743–773 (QLNTDPTLMHRGSPAGSSAKGASGGGPGAAE). Positions 754-763 (GSPAGSSAKG) are enriched in low complexity.

In terms of assembly, interacts with Notch (N) via the EGF repeats and the N EGF repeats. Ubiquitinated by Mib, leading to its endocytosis and subsequent degradation. In terms of tissue distribution, detected in all areas with neurogenic abilities, for example the neurogenic ectoderm and the primordia of the sense organs. Later expression is restricted to those cells that have adopted a neural fate.

It localises to the membrane. Acts as a ligand for Notch (N) receptor. Essential for proper differentiation of ectoderm. Delta is required for the correct separation of neural and epidermal cell lineages. Fringe (fng) acts in the Golgi to determine the type of O-linked fucose on the EGF modules in N, altering the ability of N to bind with Delta. O-fut1 also has a role in modulating the interaction. The chain is Neurogenic locus protein delta from Drosophila melanogaster (Fruit fly).